The chain runs to 524 residues: Probable beta-1,4-xylosyltransferase IRX14 (524 aa).

At 1–51 (MMKSLLPQSQLRRSAAAASAARSSGGGAGSGGADGAGSDGGAGGRAPATST) the chain is on the cytoplasmic side. The interval 21 to 41 (ARSSGGGAGSGGADGAGSDGG) is disordered. Residues 24-41 (SGGGAGSGGADGAGSDGG) are compositionally biased toward gly residues. The chain crosses the membrane as a helical; Signal-anchor for type II membrane protein span at residues 52-71 (FWFLLHALCCLVSLFLGFRF). Residues 72–524 (SRLLFFLLFS…SRSTTKRKEN (453 aa)) are Lumenal-facing. N-linked (GlcNAc...) asparagine glycans are attached at residues asparagine 132, asparagine 135, asparagine 240, and asparagine 353. Residues 492–524 (AELVDSKQDQEGRRLSRTDRSSRSRSTTKRKEN) are disordered. Positions 495 to 513 (VDSKQDQEGRRLSRTDRSS) are enriched in basic and acidic residues.

This sequence belongs to the glycosyltransferase 43 family.

It localises to the golgi apparatus membrane. In terms of biological role, probable beta-1,4-xylosyltransferase involved in xylan biosynthesis in cell walls. This is Probable beta-1,4-xylosyltransferase IRX14 from Oryza sativa subsp. japonica (Rice).